The sequence spans 432 residues: Alpha-ketoglutarate permease (432 aa).

The Cytoplasmic segment spans residues 1–32; sequence MAESTVTADSKLTSSDTRRRIWAIVGASSGNL. The chain crosses the membrane as a helical span at residues 33–53; it reads VEWFDFYVYSFCSLYFAHIFF. The Periplasmic portion of the chain corresponds to 54 to 62; the sequence is PSGNTTTQL. The helical transmembrane segment at 63 to 83 threads the bilayer; it reads LQTAGVFAAGFLMRPIGGWLF. The Cytoplasmic portion of the chain corresponds to 84–95; sequence GRIADKHGRKKS. A helical membrane pass occupies residues 96–116; sequence MLLSVCMMCFGSLVIACLPGY. The Periplasmic segment spans residues 117-118; that stretch reads ET. Residues 119-139 form a helical membrane-spanning segment; it reads IGTWAPALLLLARLFQGLSVG. Topologically, residues 140–162 are cytoplasmic; sequence GEYGTSATYMSEVAVEGRKGFYA. Residues 163 to 183 traverse the membrane as a helical segment; it reads SFQYVTLIGGQLLALLVVVVL. The Periplasmic portion of the chain corresponds to 184–193; sequence QHTMEDAALR. Residues 194-214 traverse the membrane as a helical segment; sequence EWGWRIPFALGAVLAVVALWL. Residues 215–243 are Cytoplasmic-facing; it reads RRQLDETSQQETRALKEAGSLKGLWRNRR. Residues 244–264 form a helical membrane-spanning segment; it reads AFIMVLGFTAAGSLCFYTFTT. At 265 to 279 the chain is on the periplasmic side; sequence YMQKYLVNTAGMHAN. A helical membrane pass occupies residues 280-300; it reads VASGIMTAALFVFMLIQPLIG. The Cytoplasmic portion of the chain corresponds to 301 to 309; sequence ALSDKIGRR. A helical membrane pass occupies residues 310–330; that stretch reads TSMLCFGSLAAIFTVPILSAL. The Periplasmic portion of the chain corresponds to 331–339; it reads QNVSSPYAA. Residues 340–360 traverse the membrane as a helical segment; it reads FGLVMCALLIVSFYTSISGIL. The Cytoplasmic segment spans residues 361–373; the sequence is KAEMFPAQVRALG. The helical transmembrane segment at 374–394 threads the bilayer; the sequence is VGLSYAVANAIFGGSAEYVAL. The Periplasmic portion of the chain corresponds to 395–402; it reads SLKSIGME. Residues 403 to 423 traverse the membrane as a helical segment; that stretch reads TAFFWYVTLMAVVAFLVSLML. Over 424–432 the chain is Cytoplasmic; that stretch reads HRKGKGMRL.

The protein belongs to the major facilitator superfamily. Metabolite:H+ Symporter (MHS) family (TC 2.A.1.6) family.

The protein resides in the cell inner membrane. Functionally, uptake of alpha-ketoglutarate across the boundary membrane with the concomitant import of a cation (symport system). This Escherichia coli (strain K12) protein is Alpha-ketoglutarate permease (kgtP).